Consider the following 448-residue polypeptide: uncharacterized protein (448 aa).

Transmembrane regions (helical) follow at residues 14-34 (PFII…YGII), 59-79 (TLLA…GFLA), 87-107 (VPML…TFGN), 120-140 (GLSA…VVGA), 148-168 (GGIF…GGIV), 171-191 (SLGY…DIAL), 250-270 (IFGP…FDAT), 288-308 (LMFG…GAMV), 316-333 (IGKR…LLCI), 338-358 (TSLN…VLAF), 392-412 (FSAY…VAGF), and 417-437 (FNFI…SLMA).

The protein belongs to the major facilitator superfamily. TCR/Tet family.

Its subcellular location is the endoplasmic reticulum. The protein resides in the membrane. This is an uncharacterized protein from Schizosaccharomyces pombe (strain 972 / ATCC 24843) (Fission yeast).